Consider the following 204-residue polypeptide: Translation initiation factor 2 subunit beta (204 aa).

Positions 146–204 constitute a TRAM domain; the sequence is NLEEGQVLDVEIQSLSKRGDGVVKMGRYIMYVSNAKPGQSVKIKISRISGSIVFTERAE.

It belongs to the eIF-2-beta/eIF-5 family. Heterotrimer composed of an alpha, a beta and a gamma chain.

In terms of biological role, eIF-2 functions in the early steps of protein synthesis by forming a ternary complex with GTP and initiator tRNA. The polypeptide is Translation initiation factor 2 subunit beta (Methanoregula boonei (strain DSM 21154 / JCM 14090 / 6A8)).